A 354-amino-acid polypeptide reads, in one-letter code: GTPase Obg (354 aa).

The 159-residue stretch at 1-159 (MKFVDEVKIH…RDLVLELKLL (159 aa)) folds into the Obg domain. In terms of domain architecture, OBG-type G spans 160–333 (ADVGIVGYPN…LLDAVGRALF (174 aa)). GTP contacts are provided by residues 166–173 (GYPNAGKS), 191–195 (FTTLT), 212–215 (DIPG), 283–286 (TKID), and 314–316 (SAV). Positions 173 and 193 each coordinate Mg(2+).

This sequence belongs to the TRAFAC class OBG-HflX-like GTPase superfamily. OBG GTPase family. As to quaternary structure, monomer. The cofactor is Mg(2+).

It is found in the cytoplasm. In terms of biological role, an essential GTPase which binds GTP, GDP and possibly (p)ppGpp with moderate affinity, with high nucleotide exchange rates and a fairly low GTP hydrolysis rate. Plays a role in control of the cell cycle, stress response, ribosome biogenesis and in those bacteria that undergo differentiation, in morphogenesis control. The protein is GTPase Obg of Anaeromyxobacter sp. (strain K).